Reading from the N-terminus, the 254-residue chain is Thiazole synthase (254 aa).

Lysine 96 serves as the catalytic Schiff-base intermediate with DXP. 1-deoxy-D-xylulose 5-phosphate-binding positions include glycine 157, 183-184, and 205-206; these read AG and NT.

This sequence belongs to the ThiG family. As to quaternary structure, homotetramer. Forms heterodimers with either ThiH or ThiS.

The protein localises to the cytoplasm. The enzyme catalyses [ThiS sulfur-carrier protein]-C-terminal-Gly-aminoethanethioate + 2-iminoacetate + 1-deoxy-D-xylulose 5-phosphate = [ThiS sulfur-carrier protein]-C-terminal Gly-Gly + 2-[(2R,5Z)-2-carboxy-4-methylthiazol-5(2H)-ylidene]ethyl phosphate + 2 H2O + H(+). It participates in cofactor biosynthesis; thiamine diphosphate biosynthesis. Its function is as follows. Catalyzes the rearrangement of 1-deoxy-D-xylulose 5-phosphate (DXP) to produce the thiazole phosphate moiety of thiamine. Sulfur is provided by the thiocarboxylate moiety of the carrier protein ThiS. In vitro, sulfur can be provided by H(2)S. In Clostridium kluyveri (strain ATCC 8527 / DSM 555 / NBRC 12016 / NCIMB 10680 / K1), this protein is Thiazole synthase.